The primary structure comprises 142 residues: ATP synthase epsilon chain (142 aa).

It belongs to the ATPase epsilon chain family. In terms of assembly, F-type ATPases have 2 components, CF(1) - the catalytic core - and CF(0) - the membrane proton channel. CF(1) has five subunits: alpha(3), beta(3), gamma(1), delta(1), epsilon(1). CF(0) has three main subunits: a, b and c.

The protein resides in the cell inner membrane. Its function is as follows. Produces ATP from ADP in the presence of a proton gradient across the membrane. This Shewanella sediminis (strain HAW-EB3) protein is ATP synthase epsilon chain.